A 209-amino-acid polypeptide reads, in one-letter code: Interleukin-6 (209 aa).

An N-terminal signal peptide occupies residues 1–26 (RFTSAFSPVAFSLGLLLVMATAFPTP). Positions 28-47 (PVGGESQADATSNRPPLTSP) are disordered. C69 and C75 form a disulfide bridge. S78 bears the Phosphoserine mark. C98 and C108 form a disulfide bridge.

This sequence belongs to the IL-6 superfamily. Component of a hexamer of two molecules each of IL6, IL6R and IL6ST; first binds to IL6R to associate with the signaling subunit IL6ST. Interacts with IL6R (via the N-terminal ectodomain); this interaction may be affected by IL6R-binding with SORL1, hence decreasing IL6 cis signaling. Interacts with SORL1 (via the N-terminal ectodomain); this interaction leads to IL6 internalization and lysosomal degradation. May form a trimeric complex with the soluble SORL1 ectodomain and soluble IL6R receptor; this interaction might stabilize circulating IL6, hence promoting IL6 trans signaling.

The protein localises to the secreted. Cytokine with a wide variety of biological functions in immunity, tissue regeneration, and metabolism. Binds to IL6R, then the complex associates to the signaling subunit IL6ST/gp130 to trigger the intracellular IL6-signaling pathway. The interaction with the membrane-bound IL6R and IL6ST stimulates 'classic signaling', whereas the binding of IL6 and soluble IL6R to IL6ST stimulates 'trans-signaling'. Alternatively, 'cluster signaling' occurs when membrane-bound IL6:IL6R complexes on transmitter cells activate IL6ST receptors on neighboring receiver cells. Functionally, IL6 is a potent inducer of the acute phase response. Rapid production of IL6 contributes to host defense during infection and tissue injury, but excessive IL6 synthesis is involved in disease pathology. In the innate immune response, is synthesized by myeloid cells, such as macrophages and dendritic cells, upon recognition of pathogens through toll-like receptors (TLRs) at the site of infection or tissue injury. In the adaptive immune response, is required for the differentiation of B cells into immunoglobulin-secreting cells. Plays a major role in the differentiation of CD4(+) T cell subsets. Essential factor for the development of T follicular helper (Tfh) cells that are required for the induction of germinal-center formation. Required to drive naive CD4(+) T cells to the Th17 lineage. Also required for proliferation of myeloma cells and the survival of plasmablast cells. Its function is as follows. Acts as an essential factor in bone homeostasis and on vessels directly or indirectly by induction of VEGF, resulting in increased angiogenesis activity and vascular permeability. Induces, through 'trans-signaling' and synergistically with IL1B and TNF, the production of VEGF. Involved in metabolic controls, is discharged into the bloodstream after muscle contraction increasing lipolysis and improving insulin resistance. 'Trans-signaling' in central nervous system also regulates energy and glucose homeostasis. Mediates, through GLP-1, crosstalk between insulin-sensitive tissues, intestinal L cells and pancreatic islets to adapt to changes in insulin demand. Also acts as a myokine. Plays a protective role during liver injury, being required for maintenance of tissue regeneration. Also has a pivotal role in iron metabolism by regulating HAMP/hepcidin expression upon inflammation or bacterial infection. Through activation of IL6ST-YAP-NOTCH pathway, induces inflammation-induced epithelial regeneration. This is Interleukin-6 (IL6) from Phoca vitulina (Harbor seal).